Reading from the N-terminus, the 146-residue chain is Protein disulfide-isomerase 5-1 (146 aa).

The signal sequence occupies residues 1-25 (MTLGARLVAPMIILLLFIPIELVKA). One can recognise a Thioredoxin domain in the interval 26–133 (EVITLTPETF…LKAFVVEETE (108 aa)). Residues cysteine 55 and cysteine 58 each act as nucleophile in the active site. A disulfide bridge connects residues cysteine 55 and cysteine 58.

Belongs to the protein disulfide isomerase family.

Functionally, acts as a protein-folding catalyst that interacts with nascent polypeptides to catalyze the formation, isomerization, and reduction or oxidation of disulfide bonds. The sequence is that of Protein disulfide-isomerase 5-1 (PDIL5-1) from Arabidopsis thaliana (Mouse-ear cress).